A 235-amino-acid chain; its full sequence is Large ribosomal subunit protein uL1 (235 aa).

Belongs to the universal ribosomal protein uL1 family. In terms of assembly, part of the 50S ribosomal subunit.

In terms of biological role, binds directly to 23S rRNA. The L1 stalk is quite mobile in the ribosome, and is involved in E site tRNA release. Protein L1 is also a translational repressor protein, it controls the translation of the L11 operon by binding to its mRNA. This is Large ribosomal subunit protein uL1 from Prochlorococcus marinus subsp. pastoris (strain CCMP1986 / NIES-2087 / MED4).